Consider the following 151-residue polypeptide: HTH-type transcriptional regulator FL11 (151 aa).

In terms of domain architecture, HTH asnC-type spans Leu5–Asn66. The segment at residues Leu24–Lys43 is a DNA-binding region (H-T-H motif). Position 98–104 (Glu98–Asp104) interacts with L-arginine. Residues Asn118, Asp122, and Thr133 to Thr135 each bind L-lysine. L-arginine contacts are provided by residues Asp122 and Thr133–Thr135.

As to quaternary structure, homodimer. Binds DNA as a dimer and an octamer.

With respect to regulation, in the famine mode, FL11 forms dimers and acts as a repressor, leading to growth arrest. In the feast mode, in the presence of high concentrations of lysine or arginine, four dimers assemble into an octamer and cover the fl11 and lysine biosynthesis promoters. This leads to the inhibition of fl11 expression and lysine biosynthesis, decrease of the FL11 concentration in the cell, derepression of the target genes and activation of the metabolism. Functionally, DNA-binding protein involved in the repression of transcription of a large number of genes, thereby arresting growth, in response to environmental changes. The sequence is that of HTH-type transcriptional regulator FL11 from Pyrococcus furiosus (strain ATCC 43587 / DSM 3638 / JCM 8422 / Vc1).